The following is a 389-amino-acid chain: bZIP transcription factor 68 (389 aa).

Positions 1–16 are enriched in basic and acidic residues; the sequence is MGSSEMEKSGKEKEPK. 5 disordered regions span residues 1–42, 124–154, 170–236, 285–318, and 356–389; these read MGSS…VSAG, MAEA…KRSK, AGKN…NLPV, QPWL…RKQA, and SSLK…QDVA. A compositionally biased stretch (low complexity) spans 19 to 32; the sequence is PPSTSSSAPATVVS. Over residues 137 to 149 the composition is skewed to basic and acidic residues; that stretch reads GDGKPSDGKEKLP. A Glycyl lysine isopeptide (Lys-Gly) (interchain with G-Cter in ubiquitin) cross-link involves residue Lys-154. A compositionally biased stretch (low complexity) spans 170–205; it reads AGKNSGASANGACSKSAESGSDGSSDGSDANSQNDS. 2 stretches are compositionally biased toward basic and acidic residues: residues 206–215 and 304–318; these read GSRHNGKDGE and SNRE…RKQA. A bZIP domain is found at 295–358; that stretch reads EIKRQRRKQS…EELLAENSSL (64 aa). The basic motif stretch occupies residues 297-316; the sequence is KRQRRKQSNRESARRSRLRK. Positions 323 to 358 are leucine-zipper; sequence LAQRAEVLNGENSSLRAEINKLKSQYEELLAENSSL. A compositionally biased stretch (polar residues) spans 356–366; sequence SSLKNKFSSAP. The segment covering 372-389 has biased composition (basic and acidic residues); the sequence is DLDKNEQEPQRSTRQDVA.

Belongs to the bZIP family. In terms of assembly, monomer, homodimer and heterodimers with GBF1/BZIP41, GBF2/BZIP54 and GBF3/BZIP55. Heterodimers with BZIP16. Interacts with GIP1.

The protein localises to the nucleus. Functionally, transcriptional activator that binds to the G-box motif (5'-CACGTG-3') and other cis-acting elements with 5'-ACGT-3' core, such as Hex, C-box and as-1 motifs. Possesses high binding affinity to G-box, much lower affinity to Hex and C-box, and little affinity to as-1 element. G-box and G-box-like motifs are cis-acting elements defined in promoters of certain plant genes which are regulated by such diverse stimuli as light-induction or hormone control. Binds to the G-box motif 5'-CACGTG-3' of LHCB2.4 (At3g27690) promoter. May act as transcriptional activator in light-regulated expression of LHCB2.4. Probably binds DNA as monomer. DNA-binding activity is redox-dependent. The chain is bZIP transcription factor 68 from Arabidopsis thaliana (Mouse-ear cress).